A 582-amino-acid polypeptide reads, in one-letter code: Choline kinase (582 aa).

The disordered stretch occupies residues M1–S36. S30 carries the phosphoserine; by PKA modification. S48 and S51 each carry phosphoserine. A Phosphothreonine modification is found at T54. Phosphoserine; by PKA is present on S85.

The protein belongs to the choline/ethanolamine kinase family. In terms of assembly, monomer. Interacts with NAP1. Mg(2+) serves as cofactor.

The protein localises to the cytoplasm. It catalyses the reaction choline + ATP = phosphocholine + ADP + H(+). It carries out the reaction ethanolamine + ATP = phosphoethanolamine + ADP + H(+). Its pathway is phospholipid metabolism; phosphatidylcholine biosynthesis; phosphocholine from choline: step 1/1. Its function is as follows. Catalyzes the committed step in the synthesis of phosphatidylcholine by the CDP-choline pathway. Also exhibits ethanolamine kinase activity but it is a poor substrate at 14% efficiency compared with choline. This is Choline kinase from Saccharomyces cerevisiae (strain ATCC 204508 / S288c) (Baker's yeast).